The sequence spans 306 residues: Probable thioesterase atnL (306 aa).

It belongs to the lcsJ thioesterase family.

Part of the gene cluster that mediates the biosynthesis of aspercryptins, linear lipopeptides built from six amino acids including 2 highly unusual and nonproteogenic amino acids, 2-amino-octanoic acid (2aoa) and 2-amino-dodecanol (2adol). The core structure of aspercryptins is as follows: Ser/Ala-Thr-Ile/Val-2aoa-Asn-2adol. The first step of aspercryptin biosynthesis is the generation of the fatty acid precursors, octanoic and dodecanoic acids, by the FAS subunits atnF and atnM. The fatty acid precursors are likely transformed into the corresponding alpha-amino fatty acids in three steps. First, they are hydroxylated by the cytochrome P450 monooxygenase atnE, then oxidized to the corresponding alpha-keto acids by the NAD(P)-dependent oxidoreductase atnD, and finally converted to the alpha-amino fatty acids by the PLP-dependent aminotransferases atnH or atnJ. the alpha-amino fatty acids, 2-amino-octanoic and 2-amino-dodecanoic acids, are recognized, activated, and covalently tethered to the NRPS atnA by its fourth and sixth adenylation domains. The second module of atnA is the Thr module and contains an epimerase (E) domain responsible for the epimerization of Thr to D-allo-Thr. Additionally, despite atnA having only one epimerase domain, the first amino acid of aspercryptin A1 is D-Ser, suggesting that serine is either loaded directly as D-Ser on the first module or that the epimerase domain in the threonine module epimerizes both L-Ser and L-Thr. After condensation of the hexapeptide of aspercryptin, the C-terminal reductase (TE) domain might be involved in the reductive release and production of the aldehyde hexapeptide. Further reduction would generate aspercryptins. The variety of aspercryptins produced reflects the flexibility of the atnA NRPS, allowing incorporation of alanine instead of serine, valine for isoleucine, and a C10 fatty amino alcohol instead of the C12 version. AtnB seems to be involved in the selectivity for Ile versus Val by the third module. Moreover, type B, C and D aspercryptins have an additional N-terminal cichorine, acetyl and propionyl group respectively. This is Probable thioesterase atnL from Emericella nidulans (strain FGSC A4 / ATCC 38163 / CBS 112.46 / NRRL 194 / M139) (Aspergillus nidulans).